The sequence spans 275 residues: NH(3)-dependent NAD(+) synthetase (275 aa).

46-53 is an ATP binding site; the sequence is GISGGQDS. Asp-52 serves as a coordination point for Mg(2+). Arg-140 is a deamido-NAD(+) binding site. Thr-160 is a binding site for ATP. Glu-165 is a binding site for Mg(2+). Deamido-NAD(+) is bound by residues Lys-173 and Asp-180. Residues Lys-189 and Thr-211 each contribute to the ATP site. 260-261 serves as a coordination point for deamido-NAD(+); sequence HK.

Belongs to the NAD synthetase family. Homodimer.

It catalyses the reaction deamido-NAD(+) + NH4(+) + ATP = AMP + diphosphate + NAD(+) + H(+). It participates in cofactor biosynthesis; NAD(+) biosynthesis; NAD(+) from deamido-NAD(+) (ammonia route): step 1/1. Its function is as follows. Catalyzes the ATP-dependent amidation of deamido-NAD to form NAD. Uses ammonia as a nitrogen source. In Escherichia coli (strain K12 / MC4100 / BW2952), this protein is NH(3)-dependent NAD(+) synthetase.